The chain runs to 967 residues: RNA polymerase-associated protein RapA (967 aa).

One can recognise a Helicase ATP-binding domain in the interval 163–333 (EVGQRHAPRV…FARLRLLDPN (171 aa)). ATP is bound at residue 176–183 (DEVGLGKT). The DEAH box signature appears at 279–282 (DEAH). Residues 489–677 (RVEWLLNYLT…TCRQQHDSLK (189 aa)) form the Helicase C-terminal domain.

This sequence belongs to the SNF2/RAD54 helicase family. RapA subfamily. As to quaternary structure, interacts with the RNAP. Has a higher affinity for the core RNAP than for the holoenzyme. Its ATPase activity is stimulated by binding to RNAP.

Its function is as follows. Transcription regulator that activates transcription by stimulating RNA polymerase (RNAP) recycling in case of stress conditions such as supercoiled DNA or high salt concentrations. Probably acts by releasing the RNAP, when it is trapped or immobilized on tightly supercoiled DNA. Does not activate transcription on linear DNA. Probably not involved in DNA repair. This Pectobacterium atrosepticum (strain SCRI 1043 / ATCC BAA-672) (Erwinia carotovora subsp. atroseptica) protein is RNA polymerase-associated protein RapA.